The following is a 168-amino-acid chain: ATP synthase subunit b (168 aa).

The helical transmembrane segment at 9 to 29 (SIPFGTIAYTLFIFLLLLVML) threads the bilayer.

It belongs to the ATPase B chain family. As to quaternary structure, F-type ATPases have 2 components, F(1) - the catalytic core - and F(0) - the membrane proton channel. F(1) has five subunits: alpha(3), beta(3), gamma(1), delta(1), epsilon(1). F(0) has three main subunits: a(1), b(2) and c(10-14). The alpha and beta chains form an alternating ring which encloses part of the gamma chain. F(1) is attached to F(0) by a central stalk formed by the gamma and epsilon chains, while a peripheral stalk is formed by the delta and b chains.

The protein localises to the cell membrane. Functionally, f(1)F(0) ATP synthase produces ATP from ADP in the presence of a proton or sodium gradient. F-type ATPases consist of two structural domains, F(1) containing the extramembraneous catalytic core and F(0) containing the membrane proton channel, linked together by a central stalk and a peripheral stalk. During catalysis, ATP synthesis in the catalytic domain of F(1) is coupled via a rotary mechanism of the central stalk subunits to proton translocation. In terms of biological role, component of the F(0) channel, it forms part of the peripheral stalk, linking F(1) to F(0). The protein is ATP synthase subunit b of Bacillus cereus (strain B4264).